The following is a 92-amino-acid chain: Sec-independent protein translocase protein TatA (92 aa).

The helical transmembrane segment at Ile-2–Phe-22 threads the bilayer. The segment at Lys-43 to Gly-92 is disordered. Positions Glu-53–Gln-80 are enriched in basic and acidic residues.

This sequence belongs to the TatA/E family. In terms of assembly, the Tat system comprises two distinct complexes: a TatABC complex, containing multiple copies of TatA, TatB and TatC subunits, and a separate TatA complex, containing only TatA subunits. Substrates initially bind to the TatABC complex, which probably triggers association of the separate TatA complex to form the active translocon.

Its subcellular location is the cell membrane. In terms of biological role, part of the twin-arginine translocation (Tat) system that transports large folded proteins containing a characteristic twin-arginine motif in their signal peptide across membranes. TatA could form the protein-conducting channel of the Tat system. The chain is Sec-independent protein translocase protein TatA from Rubrobacter xylanophilus (strain DSM 9941 / JCM 11954 / NBRC 16129 / PRD-1).